The sequence spans 214 residues: Octanoyltransferase (214 aa).

A BPL/LPL catalytic domain is found at 34–214 (GVQKELVWLL…KFNEIFSNFN (181 aa)). Residues 73–80 (RGGKYTYH), 145–147 (AFG), and 158–160 (GVS) each bind substrate. Cys-176 functions as the Acyl-thioester intermediate in the catalytic mechanism.

The protein belongs to the LipB family.

Its subcellular location is the cytoplasm. The catalysed reaction is octanoyl-[ACP] + L-lysyl-[protein] = N(6)-octanoyl-L-lysyl-[protein] + holo-[ACP] + H(+). It participates in protein modification; protein lipoylation via endogenous pathway; protein N(6)-(lipoyl)lysine from octanoyl-[acyl-carrier-protein]: step 1/2. Its function is as follows. Catalyzes the transfer of endogenously produced octanoic acid from octanoyl-acyl-carrier-protein onto the lipoyl domains of lipoate-dependent enzymes. Lipoyl-ACP can also act as a substrate although octanoyl-ACP is likely to be the physiological substrate. The polypeptide is Octanoyltransferase (Ehrlichia chaffeensis (strain ATCC CRL-10679 / Arkansas)).